We begin with the raw amino-acid sequence, 349 residues long: Phosphoribosylformylglycinamidine cyclo-ligase (349 aa).

It belongs to the AIR synthase family.

Its subcellular location is the cytoplasm. The enzyme catalyses 2-formamido-N(1)-(5-O-phospho-beta-D-ribosyl)acetamidine + ATP = 5-amino-1-(5-phospho-beta-D-ribosyl)imidazole + ADP + phosphate + H(+). It functions in the pathway purine metabolism; IMP biosynthesis via de novo pathway; 5-amino-1-(5-phospho-D-ribosyl)imidazole from N(2)-formyl-N(1)-(5-phospho-D-ribosyl)glycinamide: step 2/2. In Psychrobacter arcticus (strain DSM 17307 / VKM B-2377 / 273-4), this protein is Phosphoribosylformylglycinamidine cyclo-ligase.